We begin with the raw amino-acid sequence, 94 residues long: Neurotoxin LmNaTx45.2 (94 aa).

An N-terminal signal peptide occupies residues 1–18 (MKLAILSLFLVFQIGVES). The 67-residue stretch at 20-86 (KNGFALDHYG…IGDSRKNYCD (67 aa)) folds into the LCN-type CS-alpha/beta domain. 4 disulfides stabilise this stretch: Cys34–Cys85, Cys44–Cys63, Cys48–Cys65, and Cys59–Cys85.

This sequence belongs to the long (4 C-C) scorpion toxin superfamily. Sodium channel inhibitor family. Beta subfamily. In terms of tissue distribution, expressed by the venom gland.

Its subcellular location is the secreted. Its function is as follows. Binds voltage-independently at site-4 of sodium channels (Nav) and shift the voltage of activation toward more negative potentials thereby affecting sodium channel activation and promoting spontaneous and repetitive firing. The sequence is that of Neurotoxin LmNaTx45.2 from Lychas mucronatus (Chinese swimming scorpion).